A 261-amino-acid chain; its full sequence is Small ribosomal subunit protein uS2 (261 aa).

Residues G224 to D261 form a disordered region. Residues E245–E254 show a composition bias toward acidic residues.

Belongs to the universal ribosomal protein uS2 family.

This Lactobacillus gasseri (strain ATCC 33323 / DSM 20243 / BCRC 14619 / CIP 102991 / JCM 1131 / KCTC 3163 / NCIMB 11718 / NCTC 13722 / AM63) protein is Small ribosomal subunit protein uS2.